The primary structure comprises 486 residues: Betaine aldehyde dehydrogenase (486 aa).

Positions 23 and 90 each coordinate K(+). 147–149 (GAW) is an NAD(+) binding site. The active-site Charge relay system is the Lys-159. NAD(+) is bound by residues 173-176 (KPSE) and 226-229 (ESGT). Leu-241 is a binding site for K(+). The active-site Proton acceptor is the Glu-247. NAD(+)-binding residues include Gly-249, Cys-281, and Glu-382. Residue Cys-281 is the Nucleophile of the active site. Cys-281 is subject to Cysteine sulfenic acid (-SOH). Residues Lys-452 and Gly-455 each coordinate K(+). The active-site Charge relay system is the Glu-459.

The protein belongs to the aldehyde dehydrogenase family. As to quaternary structure, dimer of dimers. K(+) serves as cofactor.

The enzyme catalyses betaine aldehyde + NAD(+) + H2O = glycine betaine + NADH + 2 H(+). Its pathway is amine and polyamine biosynthesis; betaine biosynthesis via choline pathway; betaine from betaine aldehyde: step 1/1. Functionally, involved in the biosynthesis of the osmoprotectant glycine betaine. Catalyzes the irreversible oxidation of betaine aldehyde to the corresponding acid. The sequence is that of Betaine aldehyde dehydrogenase from Vibrio campbellii (strain ATCC BAA-1116).